Here is a 148-residue protein sequence, read N- to C-terminus: uncharacterized protein (148 aa).

The tract at residues Met1–Leu108 is disordered. Residues Arg22–Arg42 are compositionally biased toward basic residues. Residues Asp88–Arg97 are compositionally biased toward polar residues.

This is an uncharacterized protein from Homo sapiens (Human).